A 101-amino-acid chain; its full sequence is Large ribosomal subunit protein bL9m (101 aa).

Residues 1–32 (MSIMKPTTRFFRFNSLELAVSPFQRIYGQLRF) constitute a mitochondrion transit peptide.

Belongs to the bacterial ribosomal protein bL9 family. In terms of assembly, component of the mitochondrial large ribosomal subunit (mt-LSU). Mature yeast 74S mitochondrial ribosomes consist of a small (37S) and a large (54S) subunit. The 37S small subunit contains a 15S ribosomal RNA (15S mt-rRNA) and at least 32 different proteins. The 54S large subunit contains a 21S rRNA (21S mt-rRNA) and at least 45 different proteins.

The protein localises to the mitochondrion. In terms of biological role, component of the mitochondrial ribosome (mitoribosome), a dedicated translation machinery responsible for the synthesis of mitochondrial genome-encoded proteins, including at least some of the essential transmembrane subunits of the mitochondrial respiratory chain. The mitoribosomes are attached to the mitochondrial inner membrane and translation products are cotranslationally integrated into the membrane. This chain is Large ribosomal subunit protein bL9m, found in Schizosaccharomyces pombe (strain 972 / ATCC 24843) (Fission yeast).